The primary structure comprises 293 residues: 3-methyl-2-oxobutanoate hydroxymethyltransferase (293 aa).

Residues 1-29 (MTAAHDRSENQPGRPGGETTAPYGSAPRR) are disordered. Residues aspartate 73 and aspartate 112 each coordinate Mg(2+). Residues 73-74 (DS), aspartate 112, and lysine 142 contribute to the 3-methyl-2-oxobutanoate site. Glutamate 144 provides a ligand contact to Mg(2+). Residue glutamate 210 is the Proton acceptor of the active site.

The protein belongs to the PanB family. As to quaternary structure, homodecamer; pentamer of dimers. Mg(2+) serves as cofactor.

It is found in the cytoplasm. The enzyme catalyses 3-methyl-2-oxobutanoate + (6R)-5,10-methylene-5,6,7,8-tetrahydrofolate + H2O = 2-dehydropantoate + (6S)-5,6,7,8-tetrahydrofolate. Its pathway is cofactor biosynthesis; (R)-pantothenate biosynthesis; (R)-pantoate from 3-methyl-2-oxobutanoate: step 1/2. In terms of biological role, catalyzes the reversible reaction in which hydroxymethyl group from 5,10-methylenetetrahydrofolate is transferred onto alpha-ketoisovalerate to form ketopantoate. This chain is 3-methyl-2-oxobutanoate hydroxymethyltransferase, found in Saccharopolyspora erythraea (strain ATCC 11635 / DSM 40517 / JCM 4748 / NBRC 13426 / NCIMB 8594 / NRRL 2338).